We begin with the raw amino-acid sequence, 273 residues long: uncharacterized protein (273 aa).

The 103-residue stretch at 29 to 131 folds into the AB hydrolase-1 domain; it reads TLVCVHGFLS…VVLLCSSGYL (103 aa). Active-site residues include serine 102 and histidine 254.

It belongs to the DmpD/TodF/XylF esterase family.

This is an uncharacterized protein from Bacillus subtilis (strain 168).